The sequence spans 677 residues: Bargin (677 aa).

2 stretches are compositionally biased toward low complexity: residues 1-13 (MDRG…TPAV) and 29-39 (APHAAAGPDGQ). Disordered stretches follow at residues 1-39 (MDRG…PDGQ) and 168-190 (SQAT…HSHT). One can recognise a BAR domain in the interval 25–270 (EEAAAPHAAA…RENHGQADHS (246 aa)). Phosphoserine occurs at positions 183, 270, and 272. Positions 284 to 477 (VSLATHLQEL…ALIQSADTLF (194 aa)) constitute a Rho-GAP domain. Residues 504-577 (SEELPSTAVP…DMARRSTGSL (74 aa)) form a disordered region. The span at 516–530 (ATTPAPAPAPAPAPA) shows a compositional bias: pro residues. 2 positions are modified to phosphoserine: Ser-552 and Ser-558. Residues 574-677 (TGSLAAAVET…IADLTEGLED (104 aa)) form a mediates non-covalent binding of poly-ubiquitin chains region.

Expressed in brain (at protein level).

It is found in the cell membrane. The protein resides in the cytoplasm. The protein localises to the cytosol. In terms of biological role, GTPase activating protein (GAP) which specifically converts GTP-bound RAC1 and CDC42 in their inactive GDP-bound form. The GAP activity is enhanced by the non-covalent binding of K-29 and K-48 polyubiquitin chains. This chain is Bargin, found in Homo sapiens (Human).